Here is a 612-residue protein sequence, read N- to C-terminus: MAFAVELEEWVGAHWHRFITRHASGEFEAARVTLESMRRPLGMLFRALGGAPGVALEATPARRLLLRRTWLQRVAGTCEQAPVSWFNGDSLRLPESLAVYPQAELNRELYRWLALLAASAGPLRHWAQDNQRWARQLLDAYPALRPRYARLVAAHLRQRPSLDDCPAADAELEIALRRALAEPGSVERFPRVERAPWPVPLWLYPGERWTPSASAEDGEEAAAGAGKRQVARSGARKRAERIEERNSERNLLLFRLESLLSWSEHLALDRCSDDEDDPDGARVAEDLDYLSLSRQRTQKGGGLRLDLDLPAADYDDLPLGPGLKLPEWDYRQQRLLSDHVLLQPMRPRGATSASLPAHLEKTALHLRRQFACLRDGRQRLRQQPQGDEIDLDAWLDFQVERRRGGSTQPGLFLEQRPRRRDLACLLLADLSMSTEAYLDDQRRVIDSIVDSLLLFGEALQALGDPFALYGFSSVRRQQVRWQVLKDFDEGYGGEVRGRVLALSPGYYTRMGAAIRRASQVLGGQPQKRRLLLLLSDGKPNDLDRYEGRYGIEDTRQAVIEARSQGLVPFCITIDKEAADYLPYLFGADGFALVERAGQLPERLLQLYRRLRR.

Positions 213–238 (ASAEDGEEAAAGAGKRQVARSGARKR) are disordered. The 190-residue stretch at 421 to 610 (DLACLLLADL…ERLLQLYRRL (190 aa)) folds into the VWFA domain.

Its subcellular location is the cytoplasm. Functionally, component of the anaerobic respiratory chain that transforms nitrate to dinitrogen (denitrification). Function unknown, but essential for the denitrification process. This is an uncharacterized protein from Pseudomonas aeruginosa (strain ATCC 15692 / DSM 22644 / CIP 104116 / JCM 14847 / LMG 12228 / 1C / PRS 101 / PAO1).